A 306-amino-acid polypeptide reads, in one-letter code: Ribosomal RNA small subunit methyltransferase H (306 aa).

S-adenosyl-L-methionine contacts are provided by residues 36–38 (GGH), Asp56, Phe80, Asp97, and Gln104. A disordered region spans residues 280 to 306 (ASEEEVAGNPRSRSAVMRVAERTGEAA).

The protein belongs to the methyltransferase superfamily. RsmH family.

It localises to the cytoplasm. It carries out the reaction cytidine(1402) in 16S rRNA + S-adenosyl-L-methionine = N(4)-methylcytidine(1402) in 16S rRNA + S-adenosyl-L-homocysteine + H(+). Specifically methylates the N4 position of cytidine in position 1402 (C1402) of 16S rRNA. The sequence is that of Ribosomal RNA small subunit methyltransferase H from Polaromonas naphthalenivorans (strain CJ2).